Consider the following 845-residue polypeptide: Alanine--tRNA ligase (845 aa).

Zn(2+) is bound by residues His552, His556, Cys653, and His657.

This sequence belongs to the class-II aminoacyl-tRNA synthetase family. The cofactor is Zn(2+).

The protein resides in the cytoplasm. The enzyme catalyses tRNA(Ala) + L-alanine + ATP = L-alanyl-tRNA(Ala) + AMP + diphosphate. Functionally, catalyzes the attachment of alanine to tRNA(Ala) in a two-step reaction: alanine is first activated by ATP to form Ala-AMP and then transferred to the acceptor end of tRNA(Ala). Also edits incorrectly charged Ser-tRNA(Ala) and Gly-tRNA(Ala) via its editing domain. This chain is Alanine--tRNA ligase, found in Campylobacter fetus subsp. fetus (strain 82-40).